Consider the following 537-residue polypeptide: Sodium/hydrogen exchanger 9B2 (537 aa).

Positions 1 to 10 (MGDEDKRITY) are enriched in basic and acidic residues. Positions 1 to 28 (MGDEDKRITYEDSEPSTGMNYTPSMHQE) are disordered. The Cytoplasmic portion of the chain corresponds to 1-86 (MGDEDKRITY…ACPPHGLLDR (86 aa)). Residues 15–27 (PSTGMNYTPSMHQ) show a composition bias toward polar residues. A Phosphoserine modification is found at S49. The helical transmembrane segment at 87-104 (VITNVTIIVLLWAVVWSI) threads the bilayer. Topologically, residues 105–113 (TGSECLPGG) are extracellular. A helical transmembrane segment spans residues 114–133 (NLFGIIILFYCAIIGGKLLG). The Cytoplasmic segment spans residues 134–144 (LIKLPTLPPLP). Residues 145–161 (SLLGMLLAGFLIRNIPV) form a helical membrane-spanning segment. The Extracellular portion of the chain corresponds to 162–171 (INDNVQIKHK). Residues 172–189 (WSSSLRSIALSIILVRAG) form a helical membrane-spanning segment. Residues 190-200 (LGLDSKALKKL) are Cytoplasmic-facing. A helical membrane pass occupies residues 201-227 (KGVCVRLSMGPCIVEACTSALLAHYLL). The Extracellular segment spans residues 228-233 (GLPWQW). The chain crosses the membrane as a helical span at residues 234–242 (GFILGFVLG). At 243–270 (AVSPAVVVPSMLLLQGGGYGVEKGVPTL) the chain is on the cytoplasmic side. Na(+) contacts are provided by V244, G275, D278, and D279. Residues 271–290 (LMAAGSFDDILAITGFNTCL) form a helical membrane-spanning segment. The Extracellular segment spans residues 291 to 300 (GIAFSTGSTV). A helical transmembrane segment spans residues 301-324 (FNVLRGVLEVVIGVATGSVLGFFI). The Cytoplasmic portion of the chain corresponds to 325 to 339 (QYFPSRDQDKLVCKR). Residues 340–357 (TFLVLGLSVLAVFSSVHF) form a helical membrane-spanning segment. Over 358-361 (GFPG) the chain is Extracellular. A helical transmembrane segment spans residues 362-373 (SGGLCTLVMAFL). Over 374-390 (AGMGWTSEKAEVEKIIA) the chain is Cytoplasmic. The helical transmembrane segment at 391–411 (VAWDIFQPLLFGLIGAEVSIA) threads the bilayer. Topologically, residues 412–417 (SLRPET) are extracellular. The chain crosses the membrane as a helical span at residues 418-440 (VGLCVATVGIAVLIRILTTFLMV). At 441–461 (CFAGFNLKEKIFISFAWLPKA) the chain is on the cytoplasmic side. The chain crosses the membrane as a helical span at residues 462–473 (TVQAAIGSVALD). Residues 474 to 486 (TARSHGEKQLEDY) are Extracellular-facing. The helical transmembrane segment at 487–509 (GMDVLTVAFLSILITAPIGSLLI) threads the bilayer. Residues 510–537 (GLLGPRLLQKVEHQNKDEEVQGETSVQV) are Cytoplasmic-facing.

The protein belongs to the monovalent cation:proton antiporter 1 (CPA1) transporter (TC 2.A.36) family. In terms of assembly, homodimer. Dimerization is essential for SLC9B2 activity. Lipids seem to play a role in the stabilization of the dimerization subdomain. In terms of tissue distribution, widely expressed. High levels detected in the distal tubules of the kidney nephron. Detected in red blood cells (at protein level).

The protein resides in the cell membrane. It localises to the mitochondrion membrane. The protein localises to the endosome membrane. It is found in the recycling endosome membrane. Its subcellular location is the cytoplasmic vesicle. The protein resides in the secretory vesicle. It localises to the synaptic vesicle membrane. The protein localises to the cell projection. It is found in the cilium. Its subcellular location is the flagellum membrane. The protein resides in the basolateral cell membrane. It localises to the apical cell membrane. The catalysed reaction is Li(+)(out) + H(+)(in) = Li(+)(in) + H(+)(out). The enzyme catalyses Li(+)(in) + Na(+)(out) = Li(+)(out) + Na(+)(in). It catalyses the reaction Na(+)(in) + H(+)(out) = Na(+)(out) + H(+)(in). With respect to regulation, allosterically inhibited by the N-terminal domain. Inhibited by phloretin. Electroneutral Na(+) Li(+)/H(+) antiporter that extrudes Na(+) or Li(+) in exchange for external protons across the membrane. Uses the proton gradient/membrane potential to extrude sodium. Contributes to the regulation of intracellular pH and sodium homeostasis. Also able to mediate Na(+)/Li(+) antiporter activity in kidney. May play a physiological role in renal tubular function and blood pressure homeostasis. Plays an important role for insulin secretion and clathrin-mediated endocytosis in beta-cells. Involved in sperm motility and fertility. It is controversial whether SLC9B2 plays a role in osteoclast differentiation or not. This chain is Sodium/hydrogen exchanger 9B2, found in Homo sapiens (Human).